The chain runs to 413 residues: Divalent metal cation transporter MntH (413 aa).

Transmembrane regions (helical) follow at residues Phe-19 to Ala-39, Gly-49 to Met-69, Val-94 to Ile-114, Leu-122 to Ile-142, Leu-155 to Ser-175, Ala-196 to His-216, Val-240 to Ala-260, Ala-287 to Gly-307, Ile-323 to Gly-343, Ile-349 to Leu-369, and Leu-393 to Leu-413.

It belongs to the NRAMP family.

The protein localises to the cell inner membrane. In terms of biological role, h(+)-stimulated, divalent metal cation uptake system. In Erwinia tasmaniensis (strain DSM 17950 / CFBP 7177 / CIP 109463 / NCPPB 4357 / Et1/99), this protein is Divalent metal cation transporter MntH.